The primary structure comprises 148 residues: Lysozyme C (148 aa).

The N-terminal stretch at 1–18 (MKAVIILGLVLLSVTVQG) is a signal peptide. Residues 19–148 (KIFERCELAR…VSQYVQGCGV (130 aa)) form the C-type lysozyme domain. Intrachain disulfides connect Cys24–Cys146, Cys48–Cys134, Cys83–Cys99, and Cys95–Cys113. Active-site residues include Glu53 and Asp71.

It belongs to the glycosyl hydrolase 22 family. In terms of assembly, monomer.

It catalyses the reaction Hydrolysis of (1-&gt;4)-beta-linkages between N-acetylmuramic acid and N-acetyl-D-glucosamine residues in a peptidoglycan and between N-acetyl-D-glucosamine residues in chitodextrins.. In terms of biological role, lysozymes have primarily a bacteriolytic function; those in tissues and body fluids are associated with the monocyte-macrophage system and enhance the activity of immunoagents. The protein is Lysozyme C (LYZ) of Allenopithecus nigroviridis (Allen's swamp monkey).